The chain runs to 329 residues: MMSHNTTELSAIPRGVQELSLVLASLIVIANLLLALGIVLDRHLRSPPAGCFFLSLLLAGLLTGLALPTLPGLWNRSHQGYWSCLLLHLAPNFCFLSLLANLLLVHGERYMAVLQPLRPHGSVRLALFLTWISSLLFASLPALGWNHWSPGANCSSQAIFPAPYLYLEVYGLLLPAVGATALLSVRVLATAHHQLREIRRLERAVCRDAPSTLARALTWRQARAQAGATLLFLLCWGPYVATLLLSVLAYERRPPLGPVTLLSLISLGSASAAVVPVAMGLGDQRYTAPWRTAAQRWLQVLRGRPKRANPGPSTAYHSSSQCSTDLDLN.

Topologically, residues 1–18 are extracellular; the sequence is MMSHNTTELSAIPRGVQE. N-linked (GlcNAc...) asparagine glycosylation is present at N5. The chain crosses the membrane as a helical span at residues 19–39; it reads LSLVLASLIVIANLLLALGIV. Over 40–49 the chain is Cytoplasmic; that stretch reads LDRHLRSPPA. A helical membrane pass occupies residues 50–70; the sequence is GCFFLSLLLAGLLTGLALPTL. Residues 71–84 are Extracellular-facing; that stretch reads PGLWNRSHQGYWSC. N-linked (GlcNAc...) asparagine glycosylation is present at N75. Cysteines 84 and 154 form a disulfide. The chain crosses the membrane as a helical span at residues 85-105; it reads LLLHLAPNFCFLSLLANLLLV. The Cytoplasmic portion of the chain corresponds to 106 to 124; sequence HGERYMAVLQPLRPHGSVR. The chain crosses the membrane as a helical span at residues 125–145; that stretch reads LALFLTWISSLLFASLPALGW. Residues 146 to 157 are Extracellular-facing; the sequence is NHWSPGANCSSQ. N153 is a glycosylation site (N-linked (GlcNAc...) asparagine). Residues 158–178 form a helical membrane-spanning segment; it reads AIFPAPYLYLEVYGLLLPAVG. Topologically, residues 179–229 are cytoplasmic; sequence ATALLSVRVLATAHHQLREIRRLERAVCRDAPSTLARALTWRQARAQAGAT. Residues 230 to 250 traverse the membrane as a helical segment; the sequence is LLFLLCWGPYVATLLLSVLAY. Residues 251–260 lie on the Extracellular side of the membrane; it reads ERRPPLGPVT. The chain crosses the membrane as a helical span at residues 261-281; that stretch reads LLSLISLGSASAAVVPVAMGL. Residues 282-329 are Cytoplasmic-facing; the sequence is GDQRYTAPWRTAAQRWLQVLRGRPKRANPGPSTAYHSSSQCSTDLDLN. A disordered region spans residues 306 to 329; the sequence is KRANPGPSTAYHSSSQCSTDLDLN. Over residues 311-329 the composition is skewed to polar residues; it reads GPSTAYHSSSQCSTDLDLN.

This sequence belongs to the G-protein coupled receptor 1 family.

Its subcellular location is the cell membrane. Receptor for bile acid. Bile acid-binding induces its internalization, activation of extracellular signal-regulated kinase and intracellular cAMP production. May be involved in the suppression of macrophage functions by bile acids. Involved in bile acid promoted GLP1R secretion. The chain is G-protein coupled bile acid receptor 1 (Gpbar1) from Rattus norvegicus (Rat).